The following is a 96-amino-acid chain: Small ribosomal subunit protein bS6 (96 aa).

It belongs to the bacterial ribosomal protein bS6 family.

In terms of biological role, binds together with bS18 to 16S ribosomal RNA. The polypeptide is Small ribosomal subunit protein bS6 (Thermobifida fusca (strain YX)).